The sequence spans 352 residues: Histidinol-phosphate aminotransferase (352 aa).

Lysine 221 carries the post-translational modification N6-(pyridoxal phosphate)lysine.

It belongs to the class-II pyridoxal-phosphate-dependent aminotransferase family. Histidinol-phosphate aminotransferase subfamily. Homodimer. Requires pyridoxal 5'-phosphate as cofactor.

The catalysed reaction is L-histidinol phosphate + 2-oxoglutarate = 3-(imidazol-4-yl)-2-oxopropyl phosphate + L-glutamate. Its pathway is amino-acid biosynthesis; L-histidine biosynthesis; L-histidine from 5-phospho-alpha-D-ribose 1-diphosphate: step 7/9. The chain is Histidinol-phosphate aminotransferase from Staphylococcus aureus (strain MRSA252).